The following is a 39-amino-acid chain: Cytochrome b559 subunit beta (39 aa).

The helical transmembrane segment at 14 to 30 threads the bilayer; sequence WLAVHGLAVPTVFFLGS. His-18 contributes to the heme binding site.

This sequence belongs to the PsbE/PsbF family. In terms of assembly, heterodimer of an alpha subunit and a beta subunit. PSII is composed of 1 copy each of membrane proteins PsbA, PsbB, PsbC, PsbD, PsbE, PsbF, PsbH, PsbI, PsbJ, PsbK, PsbL, PsbM, PsbT, PsbX, PsbY, PsbZ, Psb30/Ycf12, at least 3 peripheral proteins of the oxygen-evolving complex and a large number of cofactors. It forms dimeric complexes. It depends on heme b as a cofactor.

Its subcellular location is the plastid. It localises to the chloroplast thylakoid membrane. Its function is as follows. This b-type cytochrome is tightly associated with the reaction center of photosystem II (PSII). PSII is a light-driven water:plastoquinone oxidoreductase that uses light energy to abstract electrons from H(2)O, generating O(2) and a proton gradient subsequently used for ATP formation. It consists of a core antenna complex that captures photons, and an electron transfer chain that converts photonic excitation into a charge separation. The protein is Cytochrome b559 subunit beta of Welwitschia mirabilis (Tree tumbo).